The following is a 122-amino-acid chain: Large ribosomal subunit protein bL12 (122 aa).

The protein belongs to the bacterial ribosomal protein bL12 family. As to quaternary structure, homodimer. Part of the ribosomal stalk of the 50S ribosomal subunit. Forms a multimeric L10(L12)X complex, where L10 forms an elongated spine to which 2 to 4 L12 dimers bind in a sequential fashion. Binds GTP-bound translation factors.

Forms part of the ribosomal stalk which helps the ribosome interact with GTP-bound translation factors. Is thus essential for accurate translation. The protein is Large ribosomal subunit protein bL12 of Shewanella loihica (strain ATCC BAA-1088 / PV-4).